We begin with the raw amino-acid sequence, 439 residues long: MSHEGEEDLLEYSDNEQEIQVDNKETAVEGTTENEATQENGEADKKGSYVGIHSTGFKDFLLKPELSRAIIDCGFEHPSEVQQHTIPQSIHGTDVLCQAKSGLGKTAVFVLSTLQQLDPVPGEVSVVVICNARELAYQIRNEYLRFSKYMPDVRTAVFYGGTPIAKDAELLKNKDTAPHIVVATPGRLKALVRDKMIDLSHVKNFVIDECDKVLEELDMRRDVQEIFRATPRDKQVMMFSATLSQEIRPICRRFLQNPLEIFVDDEAKLTLHGLQQYYIKLEEREKNRKLAQLLDDLEFNQVIIFVKSTSRANELTKLLNASNFPAITVHGHMKQEERIARYKAFKDFEKRICVSTDVFGRGIDIERINLAINYDLLNEADQYLHRVGRAGRFGTKGLAISFVSNKEDEEVLSKIQERFDVKIAEFPEEGIDPSTYLNN.

The span at methionine 1–isoleucine 19 shows a compositional bias: acidic residues. Residues methionine 1–serine 48 form a disordered region. A compositionally biased stretch (polar residues) spans glutamate 29 to asparagine 40. Residues threonine 55–glutamine 83 carry the Q motif motif. Residues isoleucine 86–isoleucine 261 form the Helicase ATP-binding domain. ATP is bound at residue alanine 99–threonine 106. The DECD box signature appears at aspartate 208 to aspartate 211. The 162-residue stretch at glycine 273–serine 434 folds into the Helicase C-terminal domain.

It belongs to the DEAD box helicase family. DECD subfamily.

It localises to the nucleus. It catalyses the reaction ATP + H2O = ADP + phosphate + H(+). ATP-binding RNA helicase involved in transcription elongation and required for the export of mRNA out of the nucleus. SUB2 also plays a role in pre-mRNA splicing and spliceosome assembly. May be involved in rDNA and telomeric silencing, and maintenance of genome integrity. This is ATP-dependent RNA helicase SUB2 (SUB2) from Candida glabrata (strain ATCC 2001 / BCRC 20586 / JCM 3761 / NBRC 0622 / NRRL Y-65 / CBS 138) (Yeast).